Consider the following 398-residue polypeptide: Probable aminomethyltransferase (398 aa).

It belongs to the GcvT family. The glycine cleavage system is composed of four proteins: P, T, L and H.

The catalysed reaction is N(6)-[(R)-S(8)-aminomethyldihydrolipoyl]-L-lysyl-[protein] + (6S)-5,6,7,8-tetrahydrofolate = N(6)-[(R)-dihydrolipoyl]-L-lysyl-[protein] + (6R)-5,10-methylene-5,6,7,8-tetrahydrofolate + NH4(+). In terms of biological role, the glycine cleavage system catalyzes the degradation of glycine. The sequence is that of Probable aminomethyltransferase from Thermococcus gammatolerans (strain DSM 15229 / JCM 11827 / EJ3).